Here is a 414-residue protein sequence, read N- to C-terminus: Glucose-1-phosphate adenylyltransferase (414 aa).

Alpha-D-glucose 1-phosphate-binding positions include G164, 181 to 182 (EK), and S199.

This sequence belongs to the bacterial/plant glucose-1-phosphate adenylyltransferase family. Homotetramer.

The enzyme catalyses alpha-D-glucose 1-phosphate + ATP + H(+) = ADP-alpha-D-glucose + diphosphate. Its pathway is glycan biosynthesis; glycogen biosynthesis. Its function is as follows. Involved in the biosynthesis of ADP-glucose, a building block required for the elongation reactions to produce glycogen. Catalyzes the reaction between ATP and alpha-D-glucose 1-phosphate (G1P) to produce pyrophosphate and ADP-Glc. The protein is Glucose-1-phosphate adenylyltransferase of Leifsonia xyli subsp. xyli (strain CTCB07).